The primary structure comprises 530 residues: Sugar transport protein MST6 (530 aa).

At 1–18 (MAGGVVVNNGGGKDYPGK) the chain is on the cytoplasmic side. A helical transmembrane segment spans residues 19–39 (LTMFVLFACIVAATGGLIFGY). The Extracellular segment spans residues 40-81 (DIGISGGVTSMNPFLIKFFPSVYRKEQAAEKNQSNQYCKFDS). A helical transmembrane segment spans residues 82 to 102 (PLLTMFTSSLYLAALVASFFA). Topologically, residues 103-119 (STVTRVAGRKWSMFGGG) are cytoplasmic. The chain crosses the membrane as a helical span at residues 120–140 (VTFLVGAALNGAAKNVLMLIL). At 141 to 142 (GR) the chain is on the extracellular side. Residues 143–163 (VLLGVGVGFANQSVPLYLSEM) traverse the membrane as a helical segment. Residues 164–169 (APARLR) are Cytoplasmic-facing. Residues 170–190 (GMLNIGFQLMITIGILCANLI) traverse the membrane as a helical segment. The Extracellular portion of the chain corresponds to 191–204 (NYGTAKIKGGWGWR). The chain crosses the membrane as a helical span at residues 205-225 (VSLALAAVPAAIIAVGALFLP). Topologically, residues 226–291 (DTPNSLIDRG…YRPQLTMAIA (66 aa)) are cytoplasmic. A helical transmembrane segment spans residues 292–312 (IPLFQQLTGINVIMFYAPVLF). The Extracellular portion of the chain corresponds to 313–323 (KTLGFADDASL). A helical transmembrane segment spans residues 324 to 344 (MSAVITGLVNVFATFVSIVTV). The Cytoplasmic portion of the chain corresponds to 345–359 (DRLGRRKLFLQGGTQ). Residues 360-380 (MLACQIVVGSLIGAKFGFSGV) traverse the membrane as a helical segment. At 381 to 388 (ADIPKAYA) the chain is on the extracellular side. A helical transmembrane segment spans residues 389-409 (AFVVLFICAYVAGFAWSWGPL). Residues 410-428 (GWLVPSEIFPLEIRSAGQS) are Cytoplasmic-facing. The chain crosses the membrane as a helical span at residues 429–449 (INVSVNMLFTFIIAQAFLPML). Over 450–453 (CRFK) the chain is Extracellular. The chain crosses the membrane as a helical span at residues 454-474 (FILFFFFGAWVVIMTLFVAFF). Topologically, residues 475–530 (LPETKNVPIEEMVLVWKSHWYWGRFIRDEDVHVGADVEMPAAGNRNGKVDPAKLAN) are cytoplasmic.

Belongs to the major facilitator superfamily. Sugar transporter (TC 2.A.1.1) family. As to expression, expressed in leaf blades, leaf sheaths, anthers, ovaries and embryos. Expressed at low levels in roots and shoots.

It is found in the cell membrane. Its function is as follows. Mediates active uptake of hexoses by sugar:proton symport. Can transport glucose, fructose, mannose, galactose, xylose and ribose. In Oryza sativa subsp. japonica (Rice), this protein is Sugar transport protein MST6.